We begin with the raw amino-acid sequence, 139 residues long: ATP synthase epsilon chain (139 aa).

The protein belongs to the ATPase epsilon chain family. F-type ATPases have 2 components, CF(1) - the catalytic core - and CF(0) - the membrane proton channel. CF(1) has five subunits: alpha(3), beta(3), gamma(1), delta(1), epsilon(1). CF(0) has three main subunits: a, b and c.

It localises to the cell inner membrane. Produces ATP from ADP in the presence of a proton gradient across the membrane. The sequence is that of ATP synthase epsilon chain from Acinetobacter baumannii (strain SDF).